The primary structure comprises 71 residues: Small ribosomal subunit protein bS21 (71 aa).

Residues 40–71 are disordered; sequence KPTQVRKRKQAAAVKRHMKRLNREQQRRQRPY. The span at 43 to 59 shows a compositional bias: basic residues; the sequence is QVRKRKQAAAVKRHMKR. Residues 60-71 show a composition bias toward basic and acidic residues; it reads LNREQQRRQRPY.

Belongs to the bacterial ribosomal protein bS21 family.

This is Small ribosomal subunit protein bS21 from Halorhodospira halophila (strain DSM 244 / SL1) (Ectothiorhodospira halophila (strain DSM 244 / SL1)).